The primary structure comprises 31 residues: Antifungal protein 1 (31 aa).

Basic and acidic residues-rich tracts occupy residues 1–10 (PGAGSQEERM) and 18–31 (DFSH…MVRE). Residues 1 to 31 (PGAGSQEERMQGQMEGQDFSHEERFLSMVRE) form a disordered region.

Heterodimer; disulfide-linked. In terms of processing, disulfide bonds.

Functionally, has antifungal activity against C.gloeosporioides but not against B.cinerea and Fusarium sp. or against various yeasts. Has no antibacterial activity. In Passiflora alata (Winged-stem passion flower), this protein is Antifungal protein 1.